The sequence spans 637 residues: MNPSPLLDLIDSPQDLRRLDKKQLPRLAGELRTFLLESVGQTGGHFASNLGAVELTIALHYVYDTPEDKLVWDVGHQSYPHKILTGRKNQMHTMRQYGGLAGFPKRCESEYDAFGVGHSSTSIGAALGMAAADKLLGSDRRSVAIIGDGAMTAGQAFEALNCAGDMDVDLLVVLNDNEMSISPNVGALPKYLASNVVRDMHGLLSTVKAQTGKVLDKIPGAMEFAQKVEHKIKTLAEEAEHAKQSLSLFENFGFRYTGPVDGHNVENLVDVLKDLRSRKGPQLLHVITKKGNGYKLAENDPVKYHAVANLPKESAAQMPSEKEPKPAAKPTYTQVFGKWLCDRAAADSRLVAITPAMREGSGLVEFEQRFPDRYFDVGIAEQHAVTFAGGLACEGMKPVVAIYSTFLQRAYDQLVHDIALQNLPVLFAVDRAGIVGADGPTHAGLYDLSFLRCVPNMIVAAPSDENECRLLLSTCYQADAPAAVRYPRGTGTGAPVSDGMETVEIGKGIIRREGEKTAFIAFGSMVAPALAVAEKLNATVADMRFVKPIDEELIVRLARSHDRIVTLEENAEQGGAGGAVLEVLAKHGICKPVLLLGVADTVTGHGDPKKLLDDLGLSAEAVERRVRAWLSDRDAAN.

Residues His-76 and 117–119 (GHS) each bind thiamine diphosphate. Asp-148 is a Mg(2+) binding site. Thiamine diphosphate contacts are provided by residues 149-150 (GA), Asn-177, Tyr-294, and Glu-381. Asn-177 serves as a coordination point for Mg(2+).

The protein belongs to the transketolase family. DXPS subfamily. As to quaternary structure, homodimer. Requires Mg(2+) as cofactor. The cofactor is thiamine diphosphate.

It catalyses the reaction D-glyceraldehyde 3-phosphate + pyruvate + H(+) = 1-deoxy-D-xylulose 5-phosphate + CO2. The protein operates within metabolic intermediate biosynthesis; 1-deoxy-D-xylulose 5-phosphate biosynthesis; 1-deoxy-D-xylulose 5-phosphate from D-glyceraldehyde 3-phosphate and pyruvate: step 1/1. Catalyzes the acyloin condensation reaction between C atoms 2 and 3 of pyruvate and glyceraldehyde 3-phosphate to yield 1-deoxy-D-xylulose-5-phosphate (DXP). The chain is 1-deoxy-D-xylulose-5-phosphate synthase from Neisseria meningitidis serogroup B (strain ATCC BAA-335 / MC58).